The sequence spans 85 residues: Beta-toxin BmKAs1 (85 aa).

The N-terminal stretch at 1-19 (MKIIIFLIVCSFVLIGVKA) is a signal peptide. Residues 20–82 (DNGYLLNKYT…LWAYETNKCN (63 aa)) enclose the LCN-type CS-alpha/beta domain. Cystine bridges form between Cys-31-Cys-81, Cys-35-Cys-56, Cys-42-Cys-63, and Cys-46-Cys-65.

It belongs to the long (4 C-C) scorpion toxin superfamily. Sodium channel inhibitor family. A possible sulfoxide Met-85 on BmP09 could explain the difference of function between BmK AS-1 and BmP09. As to expression, expressed by the venom gland.

The protein localises to the secreted. Beta toxins bind voltage-independently at site-4 of sodium channels (Nav) and shift the voltage of activation toward more negative potentials thereby affecting sodium channel activation and promoting spontaneous and repetitive firing. BmKAs1 also significantly stimulates the binding of [3H]-ryanodine to ryanodine receptors on the sarcoplasmic reticulum of the skeletal muscle. It also displays antinociceptive effect in rat models. Its function is as follows. Toxin BmP09 (which may be post-translationally modified) specifically and reversibly blocks large conductance calcium-dependent and voltage-dependent potassium channels (BK) but has no effect on sodium channels. The polypeptide is Beta-toxin BmKAs1 (Olivierus martensii (Manchurian scorpion)).